The sequence spans 623 residues: NAD-dependent malic enzyme, mitochondrial (623 aa).

Residues 1–31 constitute a mitochondrion transit peptide; that stretch reads MLVLCSRSRLTSSLIRRLKDQIANVSNHRSF. The fumarate site is built by Arg-88 and Arg-122. Catalysis depends on Ser-143, which acts as the Proton donor. Arg-196 contributes to the (S)-malate binding site. Arg-196 is a binding site for NAD(+). The Proton acceptor role is filled by Lys-214. Residues Glu-285 and Asp-286 each coordinate a divalent metal cation. Residue Asn-289 participates in NAD(+) binding. Residue Asp-309 participates in a divalent metal cation binding. Position 345 (Ala-345) interacts with NAD(+). Residues Asn-464 and Asn-509 each coordinate (S)-malate.

Belongs to the malic enzymes family. In terms of assembly, heterodimer of two related subunits. Mg(2+) serves as cofactor. Mn(2+) is required as a cofactor.

It is found in the mitochondrion matrix. The catalysed reaction is (S)-malate + NAD(+) = pyruvate + CO2 + NADH. Its pathway is photosynthesis; C4 acid pathway. The polypeptide is NAD-dependent malic enzyme, mitochondrial (Amaranthus hypochondriacus (Prince-of-Wales feather)).